The following is a 428-amino-acid chain: Cytochrome c biogenesis protein CcsB (428 aa).

Transmembrane regions (helical) follow at residues 14 to 34 (LKFA…GTFI), 72 to 92 (SLWF…CSFR), and 162 to 182 (IGPL…AYGS).

It belongs to the Ccs1/CcsB family. May interact with CcsA.

The protein localises to the cellular thylakoid membrane. Functionally, required during biogenesis of c-type cytochromes (cytochrome c6 and cytochrome f) at the step of heme attachment. This Prochlorococcus marinus (strain MIT 9301) protein is Cytochrome c biogenesis protein CcsB.